A 146-amino-acid polypeptide reads, in one-letter code: Nuclear export protein (146 aa).

As to quaternary structure, interacts with host HSC70.

The protein localises to the host cytoplasm. Functionally, may mediate the nuclear export of encapsidated genomic RNAs (ribonucleoproteins, RNPs). Interaction of viral NEP with M1-Hsc70 is thought to promote nuclear export of the viral encapsidated genomes. This is Nuclear export protein from Infectious salmon anemia virus (isolate Atlantic salmon/Norway/810/9/99) (ISAV).